Here is a 218-residue protein sequence, read N- to C-terminus: Putative inactive cathepsin L-like protein CTSL3P (218 aa).

2 disordered regions span residues 144 to 173 (GDWK…EVAQ) and 195 to 218 (GDED…EAQV). Basic and acidic residues predominate over residues 201 to 212 (EDKWPHDMRNHL).

The protein belongs to the peptidase C1 family.

The sequence is that of Putative inactive cathepsin L-like protein CTSL3P (CTSL3P) from Homo sapiens (Human).